Here is a 104-residue protein sequence, read N- to C-terminus: Circadian clock oscillator protein KaiB (104 aa).

It belongs to the KaiB family. The KaiABC complex composition changes during the circadian cycle to control KaiC phosphorylation. Complexes KaiC(6), KaiA(2-4):KaiC(6), KaiB(6):KaiC(6) and KaiC(6):KaiB(6):KaiA(12) are among the most important forms, many form cooperatively. Undergoes a major conformational rearrangment; in the free state forms homotetramers as a dimer of dimers. When bound to the CI domain of KaiC switches to a monomeric thioredoxin-fold (KaiB(fs)). KaiB(fs) binds CikA, leading it to dephosphorylate phospho-RpaA.

Functionally, key component of the KaiABC oscillator complex, which constitutes the main circadian regulator in cyanobacteria. Complex composition changes during the circadian cycle to control KaiC phosphorylation. KaiA stimulates KaiC autophosphorylation, while KaiB sequesters KaiA, leading to KaiC autodephosphorylation. Phospho-Ser-431 KaiC accumulation triggers binding of KaiB to form the KaiB(6):KaiC(6) complex, leading to changes in output regulators CikA and SasA. KaiB switches to a thioredoxin-like fold (KaiB(fs)) when bound to KaiC. KaiB(6):KaiC(6) formation exposes a site for KaiA binding that sequesters KaiA from KaiC, making the KaiC(6):KaiB(6):KaiA(12) complex that results in KaiC autodephosphorylation. Its function is as follows. A metamorphic protein which reversibly switches between an inactive tetrameric fold and a rare, thioredoxin-like monomeric fold (KaiB(fs)). KaiB(fs) binds phospho-KaiC, KaiA and CikA. KaiA and CikA compete for binding to KaiB(fs), and KaiB(fs) and SasA compete for binding to KaiC, thus the clock oscillator and output signal pathway are tightly coupled. The chain is Circadian clock oscillator protein KaiB from Acaryochloris marina (strain MBIC 11017).